Consider the following 312-residue polypeptide: Probable splicing factor, arginine/serine-rich 1 (312 aa).

The 71-residue stretch at alanine 3–proline 73 folds into the RRM 1 domain. Disordered regions lie at residues aspartate 69–tyrosine 125 and lysine 196–asparagine 312. Residues arginine 74–glycine 90 show a composition bias toward gly residues. Residues glycine 103–tyrosine 121 are compositionally biased toward basic and acidic residues. An RRM 2 domain is found at histidine 129–glutamine 202. Over residues serine 206–serine 259 the composition is skewed to basic residues.

It belongs to the splicing factor SR family. In terms of processing, extensively phosphorylated on serine residues in the RS domain.

The protein localises to the nucleus. Its function is as follows. Plays a functionally redundant role in spermatogenesis and growth rate control. This is Probable splicing factor, arginine/serine-rich 1 (rsp-1) from Caenorhabditis elegans.